The following is a 293-amino-acid chain: ATP synthase gamma chain (293 aa).

Belongs to the ATPase gamma chain family. F-type ATPases have 2 components, CF(1) - the catalytic core - and CF(0) - the membrane proton channel. CF(1) has five subunits: alpha(3), beta(3), gamma(1), delta(1), epsilon(1). CF(0) has three main subunits: a, b and c.

It is found in the cell inner membrane. Functionally, produces ATP from ADP in the presence of a proton gradient across the membrane. The gamma chain is believed to be important in regulating ATPase activity and the flow of protons through the CF(0) complex. The chain is ATP synthase gamma chain from Nitratidesulfovibrio vulgaris (strain DSM 19637 / Miyazaki F) (Desulfovibrio vulgaris).